A 646-amino-acid chain; its full sequence is Cell surface glycoprotein MUC18 (646 aa).

A signal peptide spans 1 to 23 (MGLPRLVCAFLLAACCCCPRVAG). Ig-like V-type domains lie at 24–129 (VPGE…YRIQ) and 139–242 (PNIQ…REVT). The Extracellular portion of the chain corresponds to 24–559 (VPGEAEQPAP…RKLPEPESRG (536 aa)). Disulfide bonds link Cys48/Cys116, Cys161/Cys223, Cys272/Cys320, and Cys365/Cys407. Asn56 carries N-linked (GlcNAc...) asparagine glycosylation. Ig-like C2-type domains lie at 244–330 (PVFY…TMIS), 335–424 (PQEL…QLVN), and 430–510 (PPWM…KNTS). The interval 278–299 (PPPHFSISKQNPSTREAEEETT) is disordered. Residues Asn418, Asn449, Asn467, Asn508, Asn518, Asn527, and Asn544 are each glycosylated (N-linked (GlcNAc...) asparagine). The cysteines at positions 452 and 499 are disulfide-linked. The segment at 525–554 (DSNTTTGLSTSTASPHTRANSTSTERKLPE) is disordered. The span at 533 to 547 (STSTASPHTRANSTS) shows a compositional bias: polar residues. A helical membrane pass occupies residues 560–583 (VVIVAVIVCILVLAVLGAVLYFLY). Residues 584 to 646 (KKGKLPCRRS…QGEKYIDLRH (63 aa)) are Cytoplasmic-facing. Ser606, Ser614, and Ser628 each carry phosphoserine. Positions 620-646 (EMGLLQGSSGDKRAPGDQGEKYIDLRH) are disordered. Basic and acidic residues predominate over residues 629-646 (GDKRAPGDQGEKYIDLRH).

Detected in endothelial cells in vascular tissue throughout the body. May appear at the surface of neural crest cells during their embryonic migration. Appears to be limited to vascular smooth muscle in normal adult tissues. Associated with tumor progression and the development of metastasis in human malignant melanoma. Expressed most strongly on metastatic lesions and advanced primary tumors and is only rarely detected in benign melanocytic nevi and thin primary melanomas with a low probability of metastasis.

It is found in the membrane. Its function is as follows. Plays a role in cell adhesion, and in cohesion of the endothelial monolayer at intercellular junctions in vascular tissue. Its expression may allow melanoma cells to interact with cellular elements of the vascular system, thereby enhancing hematogeneous tumor spread. Could be an adhesion molecule active in neural crest cells during embryonic development. Acts as a surface receptor that triggers tyrosine phosphorylation of FYN and PTK2/FAK1, and a transient increase in the intracellular calcium concentration. This is Cell surface glycoprotein MUC18 (MCAM) from Homo sapiens (Human).